The following is a 475-amino-acid chain: ATP synthase subunit beta (475 aa).

Position 155 to 162 (155 to 162 (GGAGVGKT)) interacts with ATP.

It belongs to the ATPase alpha/beta chains family. In terms of assembly, F-type ATPases have 2 components, CF(1) - the catalytic core - and CF(0) - the membrane proton channel. CF(1) has five subunits: alpha(3), beta(3), gamma(1), delta(1), epsilon(1). CF(0) has three main subunits: a(1), b(2) and c(9-12). The alpha and beta chains form an alternating ring which encloses part of the gamma chain. CF(1) is attached to CF(0) by a central stalk formed by the gamma and epsilon chains, while a peripheral stalk is formed by the delta and b chains.

The protein resides in the cell inner membrane. It carries out the reaction ATP + H2O + 4 H(+)(in) = ADP + phosphate + 5 H(+)(out). Its function is as follows. Produces ATP from ADP in the presence of a proton gradient across the membrane. The catalytic sites are hosted primarily by the beta subunits. In Rhizobium etli (strain CIAT 652), this protein is ATP synthase subunit beta.